A 112-amino-acid polypeptide reads, in one-letter code: Protein lin-52 homolog (112 aa).

This sequence belongs to the lin-52 family. Component of the DREAM complex.

This chain is Protein lin-52 homolog (LIN52), found in Gallus gallus (Chicken).